The primary structure comprises 219 residues: Putative NAD(P)H nitroreductase SSP0379 (219 aa).

This sequence belongs to the nitroreductase family. FMN is required as a cofactor.

The sequence is that of Putative NAD(P)H nitroreductase SSP0379 from Staphylococcus saprophyticus subsp. saprophyticus (strain ATCC 15305 / DSM 20229 / NCIMB 8711 / NCTC 7292 / S-41).